A 239-amino-acid polypeptide reads, in one-letter code: MINDVISPEFDENGRALRRIRSFVRRQGRLTKGQQLALDSYWPVMGVEYQAAPVDLNTLFGREAPIVLEIGFGMGTSLVTMAANNPQQNFLGIEVHSPGVGACLSSAHDAGLSNLRIMCHDAVEVLENMIPEASLDMVQLFFPDPWHKARHNKRRIVQTPFVELVKSKLKVGGVFHMATDWQPYAEHMLEVMSGVSGYLNLSEQNDYVPRPDSRPLTKFELRGQRLGHGVWDLMFERKE.

S-adenosyl-L-methionine-binding residues include E69, E94, D121, and D144. D144 is an active-site residue. Residue K148 coordinates substrate. Positions 150 to 155 (RHNKRR) are interaction with RNA. Substrate is bound by residues D180 and 217-220 (TKFE).

The protein belongs to the class I-like SAM-binding methyltransferase superfamily. TrmB family. In terms of assembly, monomer.

The enzyme catalyses guanosine(46) in tRNA + S-adenosyl-L-methionine = N(7)-methylguanosine(46) in tRNA + S-adenosyl-L-homocysteine. It functions in the pathway tRNA modification; N(7)-methylguanine-tRNA biosynthesis. Functionally, catalyzes the formation of N(7)-methylguanine at position 46 (m7G46) in tRNA. The polypeptide is tRNA (guanine-N(7)-)-methyltransferase (Yersinia pseudotuberculosis serotype O:1b (strain IP 31758)).